The sequence spans 480 residues: Vacuolar amino acid transporter 2 (480 aa).

The tract at residues 21–48 (LTNFPFPGTTDNDSDDGSQGQNSLNIIT) is disordered. The segment covering 37 to 46 (GSQGQNSLNI) has biased composition (polar residues). 9 helical membrane-spanning segments follow: residues 72-92 (AFMN…PFAI), 95-115 (AGIL…DWTL), 145-165 (LILF…CIII), 214-234 (LSKA…TVVI), 263-283 (LSVI…FFSM), 297-317 (ISII…FAVF), 338-358 (IARL…IFVL), 394-414 (VFIT…FELI), and 447-467 (FYLC…QTII).

This sequence belongs to the amino acid/polyamine transporter 2 family.

It is found in the vacuole membrane. In terms of biological role, probable amino acid transporter of unknown specificity. The polypeptide is Vacuolar amino acid transporter 2 (AVT2) (Saccharomyces cerevisiae (strain ATCC 204508 / S288c) (Baker's yeast)).